The following is a 243-amino-acid chain: Adenosine 5'-phosphosulfate reductase (243 aa).

This sequence belongs to the PAPS reductase family. CysH subfamily. [4Fe-4S] cluster serves as cofactor.

It is found in the cytoplasm. The enzyme catalyses [thioredoxin]-disulfide + sulfite + AMP + 2 H(+) = adenosine 5'-phosphosulfate + [thioredoxin]-dithiol. It participates in sulfur metabolism; hydrogen sulfide biosynthesis; sulfite from sulfate. Its function is as follows. Catalyzes the formation of sulfite from adenosine 5'-phosphosulfate (APS) using thioredoxin as an electron donor. This chain is Adenosine 5'-phosphosulfate reductase, found in Staphylococcus haemolyticus (strain JCSC1435).